A 1553-amino-acid chain; its full sequence is Sterol 3-beta-glucosyltransferase (1553 aa).

Polar residues-rich tracts occupy residues 1–10 and 25–36; these read MASSQPTSSG and LNTETSSSQHRA. 2 disordered regions span residues 1–106 and 189–270; these read MASS…NEED and PASA…GLAP. Residues 90-100 are compositionally biased toward basic and acidic residues; sequence LPDRLKDNGKE. Positions 211–222 are enriched in low complexity; the sequence is LLQSVPSLSRLS. The span at 223 to 232 shows a compositional bias: basic residues; that stretch reads SSHKSKKTKQ. GRAM domains are found at residues 323–370 and 464–495; these read KKLK…HLPK and SLQRVIFRSHNDGDSVKISIPIRNILDIEEAQ. The PH domain occupies 374-470; the sequence is EIAKSGYLSK…WVKSLQRVIF (97 aa). Disordered regions lie at residues 542–569, 611–662, and 805–825; these read SPEDSGANDAPKGTGGDRAIGDNLGSPR, FSRR…FDDP, and GKKHYDHPAGRRTEREDVEDD. Positions 633-650 are enriched in basic and acidic residues; that stretch reads LHGDGRRSFSKPRHEPHA. The segment covering 651 to 662 has biased composition (polar residues); that stretch reads STDSYAQSFDDP. Basic and acidic residues predominate over residues 810-819; sequence DHPAGRRTER. The 67-residue stretch at 834 to 900 folds into the GRAM 3 domain; sequence ARFQAHFALP…KDIETVDKEK (67 aa). UDP-alpha-D-glucose is bound by residues S1020, R1021, D1023, A1328, H1330, H1343, S1346, G1347, T1348, D1367, and Q1368. Disordered stretches follow at residues 1446–1504 and 1527–1553; these read KHQS…GSMS and PALGSRVLSSPPTSPGAMRGAGGVKYV. Residues 1466 to 1488 are compositionally biased toward acidic residues; that stretch reads PEDDQGQAAEEDDIDADDEEEES.

It belongs to the glycosyltransferase 28 family.

The protein resides in the cytoplasm. Its subcellular location is the preautophagosomal structure membrane. It carries out the reaction a sterol + UDP-alpha-D-glucose = a sterol 3-beta-D-glucoside + UDP + H(+). It catalyses the reaction ergosterol + UDP-alpha-D-glucose = ergosteryl 3-beta-D-glucoside + UDP + H(+). In terms of biological role, sterol glycosyltransferase responsible for the glycosylation of ergosterol to form ergosterol-glucoside. In Neurospora crassa (strain ATCC 24698 / 74-OR23-1A / CBS 708.71 / DSM 1257 / FGSC 987), this protein is Sterol 3-beta-glucosyltransferase (apg-12).